The chain runs to 170 residues: Protein ripply3 (170 aa).

Positions 40–43 match the WRPW motif motif; that stretch reads WRPW. Positions 51–61 are enriched in basic and acidic residues; sequence ELDGQQRRSGE. Positions 51–78 are disordered; the sequence is ELDGQQRRSGEADGVPTNTGPKGALGFQ. The tract at residues 79–114 is ripply homology domain; it reads HPVRLYMPKSKTSEYLQHMGRKVLASFPVQATIHFY. Residues 142–155 are compositionally biased toward polar residues; the sequence is GVDSSRGSSDNYSV. The segment at 142-170 is disordered; it reads GVDSSRGSSDNYSVQGGPKRNIGSHAGSA.

This sequence belongs to the ripply family. As to quaternary structure, interacts with tbx1 and tle4/grg4. At neurula stage, expressed in the region close to the heart mesoderm. At the tailbud stage, expressed in the pharyngeal region.

It localises to the nucleus. Functionally, acts as a transcriptional corepressor. Negative regulator of the transcriptional activity of tbx1 that plays a key role in pharyngeal development. Plays a role in the formation of the anteroposterior (AP) axis during embryonic development; required to establish the posterolateral border of the pre-placodal ectoderm (PPE) acting downstream of the retinoic acid receptor (RAR) signaling. The protein is Protein ripply3 (ripply3) of Xenopus laevis (African clawed frog).